Reading from the N-terminus, the 513-residue chain is MGTFHRLTTTAGLQTALGTFSPATTVGFVPTMGALHGGHAALIRRARQECDVVVVSIFVNPLQFGPQEDLERYPRALEADTALCQQLGVDLLFVPSVAELYPTGMKHLTVVEPPRELTEHLCGRSRPGHFRGVATIVLKLLHLVQPDRAYFGQKDAQQLAIIRRCVADLNLDVEIIGCPIVRDADGLALSSRNQYLSAEERATALALSQSLEVAQAAFRQGCWDASLLLAQVQDHLRQFPQLRLDYAELVHPQTLVPLERIETVGLLAIAGWVGQTRLIDNCLLDRRRPILAVDGPAGAGKSTVTRLAAQALGLRYLDTGAMYRAVTWWCLENNLDLHDEPAIVEAIAHCRLHLESPDPHQPTRVWINDREVSQAIRSLEVTQRVSQIAALRGVRRLMVQQQRAIGAHGGIAAEGRDIGTHVFPEAGLKIFLTASPEERAQRRWQELQQQGHCDLSYEELLAQITARDTADQQRPYAPFRKAADAIEVCTDNLGIDEVVSKIVHLYRSRFPQP.

The pantoate--beta-alanine ligase stretch occupies residues 1–282 (MGTFHRLTTT…VGQTRLIDNC (282 aa)). Residue 32 to 39 (MGALHGGH) participates in ATP binding. His39 serves as the catalytic Proton donor. (R)-pantoate is bound at residue Gln63. Gln63 provides a ligand contact to beta-alanine. 152–155 (GQKD) lines the ATP pocket. (R)-pantoate is bound at residue Gln158. Residues Val181 and 189-192 (LSSR) contribute to the ATP site. The cytidylate kinase stretch occupies residues 283-513 (LLDRRRPILA…HLYRSRFPQP (231 aa)).

In the N-terminal section; belongs to the pantothenate synthetase family. This sequence in the C-terminal section; belongs to the cytidylate kinase family. Type 1 subfamily.

It localises to the cytoplasm. The catalysed reaction is (R)-pantoate + beta-alanine + ATP = (R)-pantothenate + AMP + diphosphate + H(+). It carries out the reaction CMP + ATP = CDP + ADP. It catalyses the reaction dCMP + ATP = dCDP + ADP. Its pathway is cofactor biosynthesis; (R)-pantothenate biosynthesis; (R)-pantothenate from (R)-pantoate and beta-alanine: step 1/1. Functionally, catalyzes the condensation of pantoate with beta-alanine in an ATP-dependent reaction via a pantoyl-adenylate intermediate. In terms of biological role, catalyzes the transfer of a phosphate group from ATP to either CMP or dCMP to form CDP or dCDP and ADP, respectively. This chain is Bifunctional pantoate ligase/cytidylate kinase, found in Thermosynechococcus vestitus (strain NIES-2133 / IAM M-273 / BP-1).